The primary structure comprises 107 residues: UPF0060 membrane protein RPB_2370 (107 aa).

Helical transmembrane passes span 5 to 25, 31 to 51, 61 to 81, and 85 to 105; these read IIYV…WGWL, VWWL…LTLV, AAYG…VEGV, and RWDV…LWGP.

It belongs to the UPF0060 family.

Its subcellular location is the cell inner membrane. The polypeptide is UPF0060 membrane protein RPB_2370 (Rhodopseudomonas palustris (strain HaA2)).